Here is a 157-residue protein sequence, read N- to C-terminus: Transcriptional repressor NrdR (157 aa).

Positions M1–G22 are disordered. Residues C3–C34 fold into a zinc finger. A compositionally biased stretch (polar residues) spans S8 to R17. The region spanning L49 to R136 is the ATP-cone domain.

The protein belongs to the NrdR family. Requires Zn(2+) as cofactor.

Its function is as follows. Negatively regulates transcription of bacterial ribonucleotide reductase nrd genes and operons by binding to NrdR-boxes. The sequence is that of Transcriptional repressor NrdR from Deinococcus radiodurans (strain ATCC 13939 / DSM 20539 / JCM 16871 / CCUG 27074 / LMG 4051 / NBRC 15346 / NCIMB 9279 / VKM B-1422 / R1).